Here is a 155-residue protein sequence, read N- to C-terminus: Putative pre-16S rRNA nuclease (155 aa).

It belongs to the YqgF nuclease family.

Its subcellular location is the cytoplasm. Could be a nuclease involved in processing of the 5'-end of pre-16S rRNA. This chain is Putative pre-16S rRNA nuclease, found in Novosphingobium aromaticivorans (strain ATCC 700278 / DSM 12444 / CCUG 56034 / CIP 105152 / NBRC 16084 / F199).